A 356-amino-acid polypeptide reads, in one-letter code: Probable dual-specificity RNA methyltransferase RlmN (356 aa).

Residue E97 is the Proton acceptor of the active site. The Radical SAM core domain occupies 103 to 333 (YHHGNSVCIS…VTIRREMGSD (231 aa)). An intrachain disulfide couples C110 to C338. The [4Fe-4S] cluster site is built by C117, C121, and C124. S-adenosyl-L-methionine-binding positions include 164 to 165 (GE), S196, 219 to 221 (SLH), and N295. C338 functions as the S-methylcysteine intermediate in the catalytic mechanism.

It belongs to the radical SAM superfamily. RlmN family. The cofactor is [4Fe-4S] cluster.

It is found in the cytoplasm. It catalyses the reaction adenosine(2503) in 23S rRNA + 2 reduced [2Fe-2S]-[ferredoxin] + 2 S-adenosyl-L-methionine = 2-methyladenosine(2503) in 23S rRNA + 5'-deoxyadenosine + L-methionine + 2 oxidized [2Fe-2S]-[ferredoxin] + S-adenosyl-L-homocysteine. The catalysed reaction is adenosine(37) in tRNA + 2 reduced [2Fe-2S]-[ferredoxin] + 2 S-adenosyl-L-methionine = 2-methyladenosine(37) in tRNA + 5'-deoxyadenosine + L-methionine + 2 oxidized [2Fe-2S]-[ferredoxin] + S-adenosyl-L-homocysteine. Its function is as follows. Specifically methylates position 2 of adenine 2503 in 23S rRNA and position 2 of adenine 37 in tRNAs. The sequence is that of Probable dual-specificity RNA methyltransferase RlmN from Lachnoclostridium phytofermentans (strain ATCC 700394 / DSM 18823 / ISDg) (Clostridium phytofermentans).